A 582-amino-acid polypeptide reads, in one-letter code: Histone deacetylase 9-B (582 aa).

The interaction with mef2 stretch occupies residues 146–195 (SNEVKQKLQEFLLSKSTKDITLNGIPQKITQSSKLWYTASHHTSLEQSSP). Residues 189–205 (SLEQSSPPLGGASSSCK) are compositionally biased toward polar residues. 4 disordered regions span residues 189–254 (SLEQ…KEGN), 270–314 (TASS…QSRL), 409–447 (LSSGQSPVHPPSPLAMMENSPSSTRPKLPRHRPLNRTQS), and 496–567 (VHLQ…NQSS). Composition is skewed to basic and acidic residues over residues 213–224 (DYRDDFPLRKTV) and 238–253 (KVAERRSSPLLRRKEG). Low complexity predominate over residues 270 to 289 (TASSSAPGSGPSSPNGACSA). Over residues 295–314 (GPSSLPVTTRTERWPSQSRL) the composition is skewed to polar residues.

The protein belongs to the histone deacetylase family. HD type 2 subfamily. Homodimer. Interacts with mef2.

The protein localises to the nucleus. The catalysed reaction is N(6)-acetyl-L-lysyl-[histone] + H2O = L-lysyl-[histone] + acetate. Devoided of intrinsic deacetylase activity, promotes the deacetylation of lysine residues on the N-terminal part of the core histones (H2A, H2B, H3 and H4) by recruiting other histone deacetylases. Histone deacetylation gives a tag for epigenetic repression and plays an important role in transcriptional regulation, cell cycle progression and developmental events. Represses MEF2-dependent transcription. The sequence is that of Histone deacetylase 9-B (hdac9b) from Danio rerio (Zebrafish).